The primary structure comprises 989 residues: Phosphoenolpyruvate carboxylase (989 aa).

Catalysis depends on residues H175 and K630.

The protein belongs to the PEPCase type 1 family. Mg(2+) serves as cofactor.

It catalyses the reaction oxaloacetate + phosphate = phosphoenolpyruvate + hydrogencarbonate. Forms oxaloacetate, a four-carbon dicarboxylic acid source for the tricarboxylic acid cycle. This Prochlorococcus marinus subsp. pastoris (strain CCMP1986 / NIES-2087 / MED4) protein is Phosphoenolpyruvate carboxylase.